The chain runs to 149 residues: Arginine repressor (149 aa).

It belongs to the ArgR family.

The protein localises to the cytoplasm. It functions in the pathway amino-acid biosynthesis; L-arginine biosynthesis [regulation]. Its function is as follows. Regulates arginine biosynthesis genes. This chain is Arginine repressor, found in Bacillus velezensis (strain DSM 23117 / BGSC 10A6 / LMG 26770 / FZB42) (Bacillus amyloliquefaciens subsp. plantarum).